Reading from the N-terminus, the 1120-residue chain is Transcription-repair-coupling factor (1120 aa).

The Helicase ATP-binding domain occupies 591–756 (DLSNGMLMDR…MTGLKELSII (166 aa)). Residue 604-611 (GDVGFGKT) coordinates ATP. A DEEQ box motif is present at residues 709–712 (DEEQ). A Helicase C-terminal domain is found at 777–931 (IIRDALLHEH…GFTIASHDMD (155 aa)).

This sequence in the N-terminal section; belongs to the UvrB family. The protein in the C-terminal section; belongs to the helicase family. RecG subfamily.

Its subcellular location is the cytoplasm. Functionally, couples transcription and DNA repair by recognizing RNA polymerase (RNAP) stalled at DNA lesions. Mediates ATP-dependent release of RNAP and its truncated transcript from the DNA, and recruitment of nucleotide excision repair machinery to the damaged site. The protein is Transcription-repair-coupling factor of Rickettsia bellii (strain RML369-C).